A 301-amino-acid polypeptide reads, in one-letter code: uncharacterized protein (301 aa).

Residues Ser44 and Tyr107 each act as charge relay system in the active site. Residue Tyr133 is the Proton donor of the active site. Residue Lys162 is the Schiff-base intermediate with substrate of the active site.

This sequence belongs to the DapA family. As to quaternary structure, homotetramer.

The protein resides in the cytoplasm. This is an uncharacterized protein from Pyrobaculum islandicum (strain DSM 4184 / JCM 9189 / GEO3).